The chain runs to 273 residues: Dermonecrotic toxin LarSicTox-alphaIB1aiv (273 aa).

Histidine 5 is an active-site residue. Residues glutamate 25 and aspartate 27 each coordinate Mg(2+). Histidine 41 acts as the Nucleophile in catalysis. 2 disulfides stabilise this stretch: cysteine 45–cysteine 51 and cysteine 47–cysteine 190. Aspartate 85 lines the Mg(2+) pocket. The N-linked (GlcNAc...) asparagine glycan is linked to asparagine 250.

This sequence belongs to the arthropod phospholipase D family. Class II subfamily. It depends on Mg(2+) as a cofactor. As to expression, expressed by the venom gland.

The protein resides in the secreted. The catalysed reaction is an N-(acyl)-sphingosylphosphocholine = an N-(acyl)-sphingosyl-1,3-cyclic phosphate + choline. It catalyses the reaction an N-(acyl)-sphingosylphosphoethanolamine = an N-(acyl)-sphingosyl-1,3-cyclic phosphate + ethanolamine. The enzyme catalyses a 1-acyl-sn-glycero-3-phosphocholine = a 1-acyl-sn-glycero-2,3-cyclic phosphate + choline. It carries out the reaction a 1-acyl-sn-glycero-3-phosphoethanolamine = a 1-acyl-sn-glycero-2,3-cyclic phosphate + ethanolamine. In terms of biological role, dermonecrotic toxins cleave the phosphodiester linkage between the phosphate and headgroup of certain phospholipids (sphingolipid and lysolipid substrates), forming an alcohol (often choline) and a cyclic phosphate. This toxin acts on sphingomyelin (SM). It may also act on ceramide phosphoethanolamine (CPE), lysophosphatidylcholine (LPC) and lysophosphatidylethanolamine (LPE), but not on lysophosphatidylserine (LPS), and lysophosphatidylglycerol (LPG). It acts by transphosphatidylation, releasing exclusively cyclic phosphate products as second products. Induces dermonecrosis, hemolysis, increased vascular permeability, edema, inflammatory response, and platelet aggregation. The chain is Dermonecrotic toxin LarSicTox-alphaIB1aiv from Loxosceles arizonica (Arizona brown spider).